Reading from the N-terminus, the 164-residue chain is ATP synthase subunit b (164 aa).

Residues Gly6–Ile26 form a helical membrane-spanning segment.

It belongs to the ATPase B chain family. F-type ATPases have 2 components, F(1) - the catalytic core - and F(0) - the membrane proton channel. F(1) has five subunits: alpha(3), beta(3), gamma(1), delta(1), epsilon(1). F(0) has three main subunits: a(1), b(2) and c(10-14). The alpha and beta chains form an alternating ring which encloses part of the gamma chain. F(1) is attached to F(0) by a central stalk formed by the gamma and epsilon chains, while a peripheral stalk is formed by the delta and b chains.

The protein localises to the cell membrane. Its function is as follows. F(1)F(0) ATP synthase produces ATP from ADP in the presence of a proton or sodium gradient. F-type ATPases consist of two structural domains, F(1) containing the extramembraneous catalytic core and F(0) containing the membrane proton channel, linked together by a central stalk and a peripheral stalk. During catalysis, ATP synthesis in the catalytic domain of F(1) is coupled via a rotary mechanism of the central stalk subunits to proton translocation. Component of the F(0) channel, it forms part of the peripheral stalk, linking F(1) to F(0). The polypeptide is ATP synthase subunit b (Streptococcus pyogenes serotype M1).